We begin with the raw amino-acid sequence, 150 residues long: Large ribosomal subunit protein bL9 (150 aa).

It belongs to the bacterial ribosomal protein bL9 family.

Binds to the 23S rRNA. This chain is Large ribosomal subunit protein bL9, found in Neisseria meningitidis serogroup B (strain ATCC BAA-335 / MC58).